A 611-amino-acid chain; its full sequence is MFS siderochrome iron transporter C (611 aa).

A disordered region spans residues 1–25 (MPFLDHRTGPSYGTIDQMEQHSDDE). Residue Asn62 is glycosylated (N-linked (GlcNAc...) asparagine). Transmembrane regions (helical) follow at residues 71 to 91 (VIAY…GQTV), 107 to 127 (LIST…PPMA), 136 to 156 (FEAF…MAAS), 165 to 185 (AQIF…VFIA), 194 to 214 (AFLA…GPTI), 228 to 248 (YGMW…SLLL), 282 to 302 (MGGL…LTLA), 313 to 333 (SIVA…FWES), 353 to 373 (ALAG…SVQP), 393 to 413 (VTQT…ILIK), 418 to 438 (YRAF…LMMV), 449 to 469 (ILVT…PVQL), 486 to 506 (MFLT…GAVW), and 560 to 580 (LLIL…AMED). The tract at residues 592–611 (VDPVPAEEGEIEPNRHVKRT) is disordered.

This sequence belongs to the major facilitator superfamily.

Its subcellular location is the membrane. Its function is as follows. Major facilitator transporter that contributes to the maintenance of intracellular siderophore ferricrocin (FC) levels. Plays a role in conidiation and confers protection against oxidative stress. Also contributes to fungal virulence in the Galleria mellonella animal model system. Does not appear to play a role in either siderophore export or uptake. This Aspergillus fumigatus (strain ATCC MYA-4609 / CBS 101355 / FGSC A1100 / Af293) (Neosartorya fumigata) protein is MFS siderochrome iron transporter C.